The chain runs to 182 residues: Putative manganese efflux pump MntP (182 aa).

6 helical membrane-spanning segments follow: residues 6–26 (LIPLIIMAFALGMDAFSVSLG), 37–57 (ILYIGMTIGIFHIIMPFIGMV), 72–92 (FAGAILLIGLGFYIVYSSILE), 101–121 (IGISLFVFAFGVSIDSFSVGL), 131–151 (IITILLFGLISMLLAWMGLLL), and 162–182 (YGEIVGGIILVGFGLYLLFPI).

It belongs to the MntP (TC 9.B.29) family.

It localises to the cell membrane. Probably functions as a manganese efflux pump. The sequence is that of Putative manganese efflux pump MntP from Bacillus mycoides (strain KBAB4) (Bacillus weihenstephanensis).